Here is a 561-residue protein sequence, read N- to C-terminus: MRWILCWSLTLCLMAQTALGALHTKRPQVVTKYGTLQGKQMHVGKTPIQVFLGVPFSRPPLGILRFAPPEPPEPWKGIRDATTYPPGCLQESWGQLASMYVSTRERYKWLRFSEDCLYLNVYAPARAPGDPQLPVMVWFPGGAFIVGAASSYEGSDLAAREKVVLVFLQHRLGIFGFLSTDDSHARGNWGLLDQMAALRWVQENIAAFGGDPGNVTLFGQSAGAMSISGLMMSPLASGLFHRAISQSGTALFRLFITSNPLKVAKKVAHLAGCNHNSTQILVNCLRALSGTKVMRVSNKMRFLQLNFQRDPEEIIWSMSPVVDGVVIPDDPLVLLTQGKVSSVPYLLGVNNLEFNWLLPYIMKFPLNRQAMRKETITKMLWSTRTLLNITKEQVPLVVEEYLDNVNEHDWKMLRNRMMDIVQDATFVYATLQTAHYHRDAGLPVYLYEFEHHARGIIVKPRTDGADHGDEMYFLFGGPFATGLSMGKEKALSLQMMKYWANFARTGNPNDGNLPCWPRYNKDEKYLQLDFTTRVGMKLKEKKMAFWMSLYQSQRPEKQRQF.

The first 20 residues, 1-20 (MRWILCWSLTLCLMAQTALG), serve as a signal peptide directing secretion. A disulfide bridge links Cys88 with Cys116. N-linked (GlcNAc...) asparagine glycosylation is present at Asn214. Ser221 functions as the Acyl-ester intermediate in the catalytic mechanism. Cysteines 273 and 284 form a disulfide. N-linked (GlcNAc...) asparagine glycosylation is present at Asn276. Glu353 functions as the Charge relay system in the catalytic mechanism. Asn388 is a glycosylation site (N-linked (GlcNAc...) asparagine). His467 functions as the Charge relay system in the catalytic mechanism.

This sequence belongs to the type-B carboxylesterase/lipase family.

The protein resides in the secreted. Probable carboxylesterase. The chain is Carboxylesterase 4A (CES4A) from Homo sapiens (Human).